The following is a 252-amino-acid chain: Phosphate import ATP-binding protein PstB (252 aa).

The ABC transporter domain maps to 6–247; that stretch reads MSIRDLNFYY…PAQKATEDYI (242 aa). Residue 38–45 participates in ATP binding; it reads GPSGCGKS.

This sequence belongs to the ABC transporter superfamily. Phosphate importer (TC 3.A.1.7) family. In terms of assembly, the complex is composed of two ATP-binding proteins (PstB), two transmembrane proteins (PstC and PstA) and a solute-binding protein (PstS).

The protein resides in the cell inner membrane. The enzyme catalyses phosphate(out) + ATP + H2O = ADP + 2 phosphate(in) + H(+). Part of the ABC transporter complex PstSACB involved in phosphate import. Responsible for energy coupling to the transport system. This chain is Phosphate import ATP-binding protein PstB, found in Psychrobacter cryohalolentis (strain ATCC BAA-1226 / DSM 17306 / VKM B-2378 / K5).